Consider the following 232-residue polypeptide: NAD(P)H-hydrate epimerase (232 aa).

The YjeF N-terminal domain maps to 9 to 219 (AISVDEELFN…KLQDKYAMEL (211 aa)). 62–66 (NNGGD) contributes to the (6S)-NADPHX binding site. Residues N63 and D127 each contribute to the K(+) site. (6S)-NADPHX-binding positions include 131-137 (GFSFKPP) and D160. S163 is a binding site for K(+).

This sequence belongs to the NnrE/AIBP family. The cofactor is K(+).

It carries out the reaction (6R)-NADHX = (6S)-NADHX. The enzyme catalyses (6R)-NADPHX = (6S)-NADPHX. In terms of biological role, catalyzes the epimerization of the S- and R-forms of NAD(P)HX, a damaged form of NAD(P)H that is a result of enzymatic or heat-dependent hydration. This is a prerequisite for the S-specific NAD(P)H-hydrate dehydratase to allow the repair of both epimers of NAD(P)HX. The protein is NAD(P)H-hydrate epimerase of Aedes aegypti (Yellowfever mosquito).